A 478-amino-acid polypeptide reads, in one-letter code: NADH-quinone oxidoreductase subunit N (478 aa).

14 helical membrane-spanning segments follow: residues L5–A25, M37–L57, F68–L88, F99–S119, F121–F141, F156–F176, L199–F219, P231–L251, V268–T288, L293–S313, L320–A340, A365–F385, L401–L421, and V446–L466.

This sequence belongs to the complex I subunit 2 family. In terms of assembly, NDH-1 is composed of 14 different subunits. Subunits NuoA, H, J, K, L, M, N constitute the membrane sector of the complex.

The protein localises to the cell inner membrane. It catalyses the reaction a quinone + NADH + 5 H(+)(in) = a quinol + NAD(+) + 4 H(+)(out). Its function is as follows. NDH-1 shuttles electrons from NADH, via FMN and iron-sulfur (Fe-S) centers, to quinones in the respiratory chain. The immediate electron acceptor for the enzyme in this species is believed to be ubiquinone. Couples the redox reaction to proton translocation (for every two electrons transferred, four hydrogen ions are translocated across the cytoplasmic membrane), and thus conserves the redox energy in a proton gradient. The protein is NADH-quinone oxidoreductase subunit N of Granulibacter bethesdensis (strain ATCC BAA-1260 / CGDNIH1).